The primary structure comprises 627 residues: Polyadenylate-binding protein, cytoplasmic and nuclear (627 aa).

Over residues 1-11 (MSAADANQVQE) the composition is skewed to polar residues. The segment at 1 to 46 (MSAADANQVQESLEKLNLDSAPVASTEETEQTASGETEEAADSAQV) is disordered. RRM domains follow at residues 51-129 (ASLY…WSQR), 139-216 (GNIF…KHIS), 232-309 (TNVY…RAQK), and 335-412 (VNLF…LAQR). The span at 511–535 (DFNNGANGGRQQRGYYPNRNQNQKG) shows a compositional bias: low complexity. The interval 511-537 (DFNNGANGGRQQRGYYPNRNQNQKGRQ) is disordered. A PABC domain is found at 537–618 (QQKDLAAIIA…ALTAFEEYKK (82 aa)).

The protein belongs to the polyadenylate-binding protein type-1 family.

Its subcellular location is the cytoplasm. The protein resides in the nucleus. Binds the poly(A) tail of mRNA. Appears to be an important mediator of the multiple roles of the poly(A) tail in mRNA biogenesis, stability and translation. In the nucleus, involved in both mRNA cleavage and polyadenylation. Is also required for efficient mRNA export to the cytoplasm. Acts in concert with a poly(A)-specific nuclease (PAN) to affect poly(A) tail shortening, which may occur concomitantly with either nucleocytoplasmic mRNA transport or translational initiation. In the cytoplasm, stimulates translation initiation and regulates mRNA decay through translation termination-coupled poly(A) shortening, probably mediated by PAN. The sequence is that of Polyadenylate-binding protein, cytoplasmic and nuclear (PAB1) from Debaryomyces hansenii (strain ATCC 36239 / CBS 767 / BCRC 21394 / JCM 1990 / NBRC 0083 / IGC 2968) (Yeast).